The primary structure comprises 154 residues: UPF0178 protein GM21_2006 (154 aa).

It belongs to the UPF0178 family.

The sequence is that of UPF0178 protein GM21_2006 from Geobacter sp. (strain M21).